The sequence spans 959 residues: MMS19 nucleotide excision repair protein (959 aa).

4 HEAT repeats span residues 794-828 (QKLF…ATPQ), 832-871 (KLNI…QQDT), 874-915 (QGHL…YPTF), and 918-956 (LPHK…VGAP).

The protein belongs to the MET18/MMS19 family. As to quaternary structure, component of the CIA complex. Interacts with Xpd and galla-2. Binds to microtubules. As to expression, expressed in embryos (at protein level).

Its subcellular location is the cytoplasm. The protein resides in the cytoskeleton. It is found in the spindle. It localises to the nucleus. The protein localises to the midbody. In terms of biological role, key component of the cytosolic iron-sulfur protein assembly (CIA) complex, a multiprotein complex that mediates the incorporation of iron-sulfur cluster into apoproteins specifically involved in DNA metabolism and genomic integrity. In the CIA complex, MMS19 acts as an adapter between early-acting CIA components and a subset of cellular target iron-sulfur proteins. Essential for diploid cell cycles, organ growth and development. Regulates mitosis by binding to Xpd and thereby competing with the Xpd-mediated repression on the Cdk-activating kinase (CAK) complex. Regulates the centrosomal localization of the MT regulator tacc, a downstream target of aurA kinase. Binds to microtubules (MT). Regulates spindle and astral MT growth, MT stability and bundling. In neuroblasts, necessary for timely and coordinated spindle assembly and orientation which is necessary for mitotic progression. In young embryos, the maternal protein is important for progression through mitosis. The polypeptide is MMS19 nucleotide excision repair protein (Drosophila melanogaster (Fruit fly)).